The following is a 602-amino-acid chain: Aspartate--tRNA(Asp/Asn) ligase (602 aa).

E176 is a binding site for L-aspartate. The tract at residues 200–203 (QQFK) is aspartate. Residues R222 and H452 each contribute to the L-aspartate site. 222-224 (RDE) contacts ATP. Residue E490 participates in ATP binding. R497 serves as a coordination point for L-aspartate. Residue 542 to 545 (GIDR) participates in ATP binding.

It belongs to the class-II aminoacyl-tRNA synthetase family. Type 1 subfamily. Homodimer.

It is found in the cytoplasm. The catalysed reaction is tRNA(Asx) + L-aspartate + ATP = L-aspartyl-tRNA(Asx) + AMP + diphosphate. Its function is as follows. Aspartyl-tRNA synthetase with relaxed tRNA specificity since it is able to aspartylate not only its cognate tRNA(Asp) but also tRNA(Asn). Reaction proceeds in two steps: L-aspartate is first activated by ATP to form Asp-AMP and then transferred to the acceptor end of tRNA(Asp/Asn). The polypeptide is Aspartate--tRNA(Asp/Asn) ligase (Rickettsia bellii (strain OSU 85-389)).